The sequence spans 1114 residues: Constitutive coactivator of PPAR-gamma-like protein 1 (1114 aa).

The tract at residues 339-402 is interaction with YES1, SRC and FYN; it reads PPHYLARPNP…YNLAEPALTL (64 aa). Disordered stretches follow at residues 372-396 and 411-519; these read QAKP…YNLA and EQNY…GNQI. The span at 431-443 shows a compositional bias: polar residues; sequence SPINPAPSGSPNH. Residues 477–498 show a composition bias toward basic and acidic residues; sequence GWEKTGSHSEPQARGDPGDQTK. Residues 499–510 are compositionally biased toward polar residues; that stretch reads AEGSSTASSGSQ. Thr651 carries the post-translational modification Phosphothreonine. The interval 825–1114 is RNA binding; the sequence is AEQAAKVEKM…LEAAVLKKEE (290 aa). Omega-N-methylarginine occurs at positions 869, 880, and 882. Positions 918 to 940 are disordered; that stretch reads FSGSDSSRTSKSQGGIQPIPSQG. Lys928 is subject to N6-acetyllysine. The segment covering 929–940 has biased composition (low complexity); the sequence is SQGGIQPIPSQG. The residue at position 956 (Ser956) is a Phosphoserine. An omega-N-methylarginine mark is found at Arg978 and Arg982. A disordered region spans residues 1009–1099; that stretch reads AIQGKPPYAA…LNALSTDSGC (91 aa). Phosphoserine is present on Ser1019. Residues 1022 to 1033 show a composition bias toward basic and acidic residues; it reads EVAKELKSRSGE. Residues 1034 to 1043 are compositionally biased toward polar residues; the sequence is SKSSAMSSDG. A phosphoserine mark is found at Ser1040, Ser1041, and Ser1044. Residues 1060-1097 show a composition bias toward polar residues; it reads MNGSAGDTRAPSHSESALNNDSKTCNTNPHLNALSTDS.

It belongs to the constitutive coactivator of PPAR-gamma family. Interacts with PURA. Interacts with YES1, SRC, FYN. Upon tyrosine phosphorylation, interacts with PIK3R1. Post-translationally, arg-978 is dimethylated, probably to asymmetric dimethylarginine. Phosphorylated on tyrosine by src family kinases upon ultraviolet exposure.

It localises to the cytoplasm. It is found in the cell membrane. Its function is as follows. Component of the oxidative stress-induced survival signaling. May regulate the activation of SRC family protein kinases. May act as a scaffolding protein enabling SRC family protein kinases to phosphorylate and activate PI3-kinase. Binds IGF2 RNA and promotes the production of IGF2 protein. In Bos taurus (Bovine), this protein is Constitutive coactivator of PPAR-gamma-like protein 1 (FAM120A).